A 167-amino-acid chain; its full sequence is 6,7-dimethyl-8-ribityllumazine synthase (167 aa).

5-amino-6-(D-ribitylamino)uracil contacts are provided by residues F23, 57 to 59, and 81 to 83; these read TYE and AVI. 86–87 provides a ligand contact to (2S)-2-hydroxy-3-oxobutyl phosphate; sequence GT. The active-site Proton donor is the H89. A 5-amino-6-(D-ribitylamino)uracil-binding site is contributed by F119. Position 133 (R133) interacts with (2S)-2-hydroxy-3-oxobutyl phosphate.

The protein belongs to the DMRL synthase family.

The catalysed reaction is (2S)-2-hydroxy-3-oxobutyl phosphate + 5-amino-6-(D-ribitylamino)uracil = 6,7-dimethyl-8-(1-D-ribityl)lumazine + phosphate + 2 H2O + H(+). Its pathway is cofactor biosynthesis; riboflavin biosynthesis; riboflavin from 2-hydroxy-3-oxobutyl phosphate and 5-amino-6-(D-ribitylamino)uracil: step 1/2. Functionally, catalyzes the formation of 6,7-dimethyl-8-ribityllumazine by condensation of 5-amino-6-(D-ribitylamino)uracil with 3,4-dihydroxy-2-butanone 4-phosphate. This is the penultimate step in the biosynthesis of riboflavin. This Myxococcus xanthus (strain DK1622) protein is 6,7-dimethyl-8-ribityllumazine synthase.